The primary structure comprises 684 residues: Cleavage and polyadenylation specificity factor subunit 3 (684 aa).

N-acetylserine is present on Ser2. Zn(2+) contacts are provided by His71, His73, Asp75, His76, His158, and Asp179. The Proton donor role is filled by His396. His418 is a binding site for Zn(2+). Residues Lys462, Lys465, and Lys545 each participate in a glycyl lysine isopeptide (Lys-Gly) (interchain with G-Cter in SUMO) cross-link. Ser659 is modified (phosphoserine). Residue Thr681 is modified to Phosphothreonine.

The protein belongs to the metallo-beta-lactamase superfamily. RNA-metabolizing metallo-beta-lactamase-like family. CPSF3 subfamily. In terms of assembly, component of the cleavage and polyadenylation specificity factor (CPSF) complex, composed of CPSF1, CPSF2, CPSF3, CPSF4 and FIP1L1. Interacts with CPSF2, CSTF2 and SYMPK. Interacts with TUT1; the interaction is direct and mediates the recruitment of the CPSF complex on the 3'UTR of pre-mRNAs. Interacts with WDR33. Interacts with ZC3H3. Zn(2+) is required as a cofactor. In terms of processing, sumoylated on Lys-462, Lys-465 and Lys-545, preferentially by SUMO3.

The protein resides in the nucleus. Functionally, component of the cleavage and polyadenylation specificity factor (CPSF) complex that plays a key role in pre-mRNA 3'-end formation, recognizing the AAUAAA signal sequence and interacting with poly(A) polymerase and other factors to bring about cleavage and poly(A) addition. Has endonuclease activity, and functions as an mRNA 3'-end-processing endonuclease. Also involved in the histone 3'-end pre-mRNA processing. U7 snRNP-dependent protein that induces both the 3'-endoribonucleolytic cleavage of histone pre-mRNAs and acts as a 5' to 3' exonuclease for degrading the subsequent downstream cleavage product (DCP) of mature histone mRNAs. Cleavage occurs after the 5'-ACCCA-3' sequence in the histone pre-mRNA leaving a 3'hydroxyl group on the upstream fragment containing the stem loop (SL) and 5' phosphate on the downstream cleavage product (DCP) starting with CU nucleotides. The U7-dependent 5' to 3' exonuclease activity is processive and degrades the DCP RNA substrate even after complete removal of the U7-binding site. Binds to the downstream cleavage product (DCP) of histone pre-mRNAs and the cleaved DCP RNA substrate in a U7 snRNP dependent manner. Required for entering/progressing through S-phase of the cell cycle. Required for the selective processing of microRNAs (miRNAs) during embryonic stem cell differentiation via its interaction with ISY1. Required for the biogenesis of all miRNAs from the pri-miR-17-92 primary transcript except miR-92a. Only required for the biogenesis of miR-290 and miR-96 from the pri-miR-290-295 and pri-miR-96-183 primary transcripts, respectively. The polypeptide is Cleavage and polyadenylation specificity factor subunit 3 (CPSF3) (Bos taurus (Bovine)).